Consider the following 147-residue polypeptide: Phospholipase A2 SSD387 (147 aa).

An N-terminal signal peptide occupies residues 1 to 19 (MSPKFLLFSIIAVWSCAAA). Positions 20 to 28 (IEALFIQPR) are excised as a propeptide. Intrachain disulfides connect cysteine 55-cysteine 71, cysteine 70-cysteine 130, cysteine 77-cysteine 123, cysteine 86-cysteine 116, and cysteine 109-cysteine 121. Glycine 56 and glycine 58 together coordinate Ca(2+). The active site involves histidine 74. Aspartate 75 serves as a coordination point for Ca(2+). Aspartate 124 is an active-site residue.

The cofactor is Ca(2+). As to expression, expressed by the venom gland.

It localises to the secreted. It catalyses the reaction a 1,2-diacyl-sn-glycero-3-phosphocholine + H2O = a 1-acyl-sn-glycero-3-phosphocholine + a fatty acid + H(+). Functionally, PLA2 catalyzes the calcium-dependent hydrolysis of the 2-acyl groups in 3-sn-phosphoglycerides. The protein is Phospholipase A2 SSD387 of Scolopendra dehaani (Thai centipede).